A 510-amino-acid chain; its full sequence is Serine/threonine protein phosphatase 2A 59 kDa regulatory subunit B' eta isoform (510 aa).

The interval 1–87 (MWKQILSKLP…NNNNNNNNGV (87 aa)) is disordered. The segment covering 10-19 (PNKKSSKHEH) has biased composition (basic residues). Residues 27-42 (HSSSSSHTSGASTSKS) show a composition bias toward low complexity.

It belongs to the phosphatase 2A regulatory subunit B56 family. As to quaternary structure, PP2A consists of a common heteromeric enzyme, composed of a catalytic subunit (subunits C), a constant regulatory subunit (subunit A), and a variety of regulatory subunits such as subunits B (the R2/B/PR55/B55, R3/B''/PR72/PR130/PR59 and R5/B'/B56 families). Interacts with BZR1. Interacts with BRI1.

The protein localises to the nucleus. The protein resides in the nucleolus. Its subcellular location is the cytoplasm. The B regulatory subunit may modulate substrate selectivity and catalytic activity, and may also direct the localization of the catalytic enzyme to a particular subcellular compartment. The holoenzyme composed of PP2AA1, PP2A4 and B'ETA acts as negative regulator of plant innate immunity by controlling BAK1 phosphorylation state and activation in surface-localized immune receptor complexes. Required for the formation of the PP2A holoenzyme that negatively regulates brassinosteroid signaling by dephosphorylating and inactivating BRI1 in the cytoplasm. The chain is Serine/threonine protein phosphatase 2A 59 kDa regulatory subunit B' eta isoform (B'ETA) from Arabidopsis thaliana (Mouse-ear cress).